Here is a 1386-residue protein sequence, read N- to C-terminus: DNA-directed RNA polymerase subunit beta' (1386 aa).

Zn(2+) contacts are provided by C75, C77, C90, and C93. 3 residues coordinate Mg(2+): D466, D468, and D470. Zn(2+) is bound by residues C809, C883, C890, and C893.

The protein belongs to the RNA polymerase beta' chain family. As to quaternary structure, the RNAP catalytic core consists of 2 alpha, 1 beta, 1 beta' and 1 omega subunit. When a sigma factor is associated with the core the holoenzyme is formed, which can initiate transcription. Requires Mg(2+) as cofactor. Zn(2+) is required as a cofactor.

The catalysed reaction is RNA(n) + a ribonucleoside 5'-triphosphate = RNA(n+1) + diphosphate. Functionally, DNA-dependent RNA polymerase catalyzes the transcription of DNA into RNA using the four ribonucleoside triphosphates as substrates. The protein is DNA-directed RNA polymerase subunit beta' of Oleidesulfovibrio alaskensis (strain ATCC BAA-1058 / DSM 17464 / G20) (Desulfovibrio alaskensis).